Here is a 406-residue protein sequence, read N- to C-terminus: Altered inheritance of mitochondria protein 23, mitochondrial (406 aa).

The transit peptide at 1 to 18 (MSLRIILKRDFSQCIRVF) directs the protein to the mitochondrion. Disordered stretches follow at residues 29 to 79 (TSNR…YQQR) and 335 to 406 (ISQS…KIED). Low complexity-rich tracts occupy residues 38–54 (GNKN…NGNR), 69–79 (KTKYQQQYQQR), and 371–385 (QQQQ…SKTN).

This sequence belongs to the AIM23 family.

Its subcellular location is the mitochondrion. In Candida dubliniensis (strain CD36 / ATCC MYA-646 / CBS 7987 / NCPF 3949 / NRRL Y-17841) (Yeast), this protein is Altered inheritance of mitochondria protein 23, mitochondrial (AIM23).